The primary structure comprises 46 residues: Large ribosomal subunit protein bL34 (46 aa).

The protein belongs to the bacterial ribosomal protein bL34 family.

The protein is Large ribosomal subunit protein bL34 of Trichodesmium erythraeum (strain IMS101).